The following is a 702-amino-acid chain: Ribosomal RNA large subunit methyltransferase K/L (702 aa).

The THUMP domain occupies 43–154 (LVYQSLMWSR…KETASIALDL (112 aa)).

The protein belongs to the methyltransferase superfamily. RlmKL family.

The protein resides in the cytoplasm. The catalysed reaction is guanosine(2445) in 23S rRNA + S-adenosyl-L-methionine = N(2)-methylguanosine(2445) in 23S rRNA + S-adenosyl-L-homocysteine + H(+). It catalyses the reaction guanosine(2069) in 23S rRNA + S-adenosyl-L-methionine = N(2)-methylguanosine(2069) in 23S rRNA + S-adenosyl-L-homocysteine + H(+). Specifically methylates the guanine in position 2445 (m2G2445) and the guanine in position 2069 (m7G2069) of 23S rRNA. The protein is Ribosomal RNA large subunit methyltransferase K/L of Escherichia coli O157:H7.